Here is a 305-residue protein sequence, read N- to C-terminus: Homoserine O-succinyltransferase (305 aa).

The active-site Acyl-thioester intermediate is the Cys142. Residues Lys163 and Ser192 each contribute to the substrate site. The active-site Proton acceptor is the His235. Residue Glu237 is part of the active site. Arg249 provides a ligand contact to substrate.

It belongs to the MetA family.

The protein resides in the cytoplasm. It catalyses the reaction L-homoserine + succinyl-CoA = O-succinyl-L-homoserine + CoA. The protein operates within amino-acid biosynthesis; L-methionine biosynthesis via de novo pathway; O-succinyl-L-homoserine from L-homoserine: step 1/1. Its function is as follows. Transfers a succinyl group from succinyl-CoA to L-homoserine, forming succinyl-L-homoserine. The chain is Homoserine O-succinyltransferase from Psychromonas ingrahamii (strain DSM 17664 / CCUG 51855 / 37).